We begin with the raw amino-acid sequence, 1943 residues long: Protocadherin-15 (1943 aa).

Residues 1-26 (MFLQFAVWKCLPHGILIASLLVVSWG) form the signal peptide. Residues 27 to 1381 (QYDDDWQYED…GESLGYTEGA (1355 aa)) are Extracellular-facing. Cys-37 and Cys-125 form a disulfide bridge. Cadherin domains lie at 45 to 152 (PATI…SPTF), 153 to 270 (KHES…GPMF), 283 to 400 (RPLT…SPYF), 401 to 514 (TMPS…TPTF), 515 to 621 (PEIS…PPRF), 622 to 722 (PQLM…APVF), 724 to 824 (PYLP…SPVF), 825 to 931 (TNST…PPVF), 932 to 1040 (SKRI…IPRF), 1042 to 1149 (QEEY…PPVF), and 1150 to 1264 (QKKF…PPTL). 3 N-linked (GlcNAc...) asparagine glycosylation sites follow: Asn-57, Asn-102, and Asn-206. Asn-424, Asn-564, Asn-667, Asn-729, Asn-773, Asn-826, and Asn-856 each carry an N-linked (GlcNAc...) asparagine glycan. Residues Asn-1069, Asn-1089, and Asn-1180 are each glycosylated (N-linked (GlcNAc...) asparagine). The chain crosses the membrane as a helical span at residues 1382–1402 (LLALAFIIILCCIPAILVVLV). Over 1403–1943 (SYRQFKVRQA…VQPHSQSTSL (541 aa)) the chain is Cytoplasmic. Disordered regions lie at residues 1425–1453 (PAAK…AHLY), 1475–1533 (GNNS…STHN), and 1714–1865 (ILNS…EPHR). Residues 1431–1449 (APVPAAPAPPPPPPPPPPG) are compositionally biased toward pro residues. Composition is skewed to basic and acidic residues over residues 1480–1489 (PEDRSSHRDG) and 1498–1509 (ESHEPAHVEGPL). Pro residues-rich tracts occupy residues 1742–1760 (PHPP…PRPP) and 1769–1779 (PLSPPNPPPPQ). A compositionally biased stretch (low complexity) spans 1784 to 1795 (SLPISTPPTSSL). Positions 1796–1821 (PLPPPLSLPPPPRPPAPRLFPQPPST) are enriched in pro residues. The segment covering 1822–1834 (SIPSTDSISAPAA) has biased composition (low complexity). A compositionally biased stretch (polar residues) spans 1846-1858 (TTSTTQPPASNPQ).

Antiparallel heterodimer with CDH23. Found in a complex with TMIE and LHFPL5. Interacts with LHFPL5/TMHS; this interaction is required for efficient localization to hair bundles. Interacts with MYO7A. Interacts with USH1G; this interaction may recruit USH1G to the plasma membrane. Interacts with TOMT. Isoforms CD1 and CD3 interact with TMC1 (via N-terminus) and TMC2 (via N-terminus). Interacts with PIEZO1. As to expression, expressed in brain and sensory epithelium of the developing inner ear. Expressed in the retina, in the photoreceptor inner segments, the outer plexiform layer, the inner nuclei layer and the ganglion cell layer and, more diffusely in the inner plexiform layer (at protein level). Not detected in the retinal pigment epithelium (at protein level). Expressed in the spleen, dorsal root ganglion, dorsal aspect of neural tube, floor plate and ependymal cells adjacent to the neural canal.

Its subcellular location is the cell membrane. It localises to the secreted. Functionally, calcium-dependent cell-adhesion protein. Required for inner ear neuroepithelial cell elaboration and cochlear function. Probably involved in the maintenance of normal retinal function. The sequence is that of Protocadherin-15 (Pcdh15) from Mus musculus (Mouse).